The following is a 348-amino-acid chain: Pyruvate dehydrogenase E1 component subunit alpha (348 aa).

The disordered stretch occupies residues 1–21 (MAPRKSASVSSRKTAAKPAKK).

In terms of assembly, heterodimer of an alpha and a beta chain. Thiamine diphosphate is required as a cofactor.

The enzyme catalyses N(6)-[(R)-lipoyl]-L-lysyl-[protein] + pyruvate + H(+) = N(6)-[(R)-S(8)-acetyldihydrolipoyl]-L-lysyl-[protein] + CO2. In terms of biological role, the pyruvate dehydrogenase complex catalyzes the overall conversion of pyruvate to acetyl-CoA and CO(2). It contains multiple copies of three enzymatic components: pyruvate dehydrogenase (E1), dihydrolipoamide acetyltransferase (E2) and lipoamide dehydrogenase (E3). The sequence is that of Pyruvate dehydrogenase E1 component subunit alpha (pdhA) from Rhizobium meliloti (strain 1021) (Ensifer meliloti).